The primary structure comprises 1239 residues: Potassium channel subfamily T member 1 (1239 aa).

The interval 1–45 (MARAKLPRSPSEGKAGPGDTPAGSAAPEEPHGLSPLLPTRGGGSV) is disordered. Over 1–93 (MARAKLPRSP…LFFIKNQRSS (93 aa)) the chain is Cytoplasmic. A helical transmembrane segment spans residues 94–126 (LRIRLFNFSLKLLTCLLYIVRVLLDNPDQGIGC). The Extracellular portion of the chain corresponds to 127–153 (WGCTKYNYTFNGSSSEFHWAPILWVER). Asparagine 133 and asparagine 137 each carry an N-linked (GlcNAc...) asparagine glycan. Residues 154-178 (KMALWVIQVIVATISFLETMLLIYL) form a helical membrane-spanning segment. The Cytoplasmic segment spans residues 179–192 (SYKGNIWEQIFHVS). The helical transmembrane segment at 193 to 208 (FVLEMINTLPFIITVF) threads the bilayer. Over 209 to 215 (WPPLRNL) the chain is Extracellular. A helical transmembrane segment spans residues 216-233 (FIPVFLNCWLAKHALENM). The Cytoplasmic segment spans residues 234–246 (INDFHRAILRTQS). A helical membrane pass occupies residues 247-274 (AMFNQVLILFCTLLCLVFTGTCGIQHLE). The Extracellular segment spans residues 275–281 (RAGGNLN). An intramembrane region (pore-forming) is located at residues 282 to 302 (LLTSFYFCIVTFSTVGFGDVT). K(+)-binding residues include valine 296 and glycine 297. Residues 303 to 304 (PK) are Extracellular-facing. Residues 305-338 (IWPSQLLVVILICVTLVVLPLQFEELVYLWMERQ) traverse the membrane as a helical segment. At 339-1239 (KSGGNYSRHR…NPETRDETQL (901 aa)) the chain is on the cytoplasmic side. Positions 352-488 (EKHVVLCVSS…FHVKFADHVV (137 aa)) constitute an RCK N-terminal 1 domain. Leucine 513, histidine 516, serine 538, and asparagine 540 together coordinate Na(+). Residues 658 to 689 (QNTDCRPSQGGSGGGGGKLTLPTENGSGSRRP) are disordered. The Zn(2+) site is built by cysteine 758 and cysteine 759. K(+)-binding residues include arginine 761 and lysine 764. Na(+) is bound by residues arginine 761 and lysine 764. Zn(2+) is bound by residues cysteine 766 and histidine 768. K(+)-binding residues include asparagine 769, tyrosine 771, tyrosine 777, and glycine 778. Tyrosine 771 contacts Na(+). Na(+) is bound at residue phenylalanine 779. In terms of domain architecture, RCK N-terminal 2 spans 781–921 (NKLIIVSAET…QFRAKDSYSL (141 aa)). K(+) is bound by residues serine 787, leucine 818, aspartate 820, glycine 842, and aspartate 865. Disordered stretches follow at residues 1053 to 1081 (REAK…ADPV) and 1212 to 1239 (TSSS…ETQL). Residues 1213–1230 (SSSQSRKSSCSNKLSSCN) are compositionally biased toward low complexity.

This sequence belongs to the potassium channel family. Calcium-activated (TC 1.A.1.3) subfamily. KCa4.1/KCNT1 sub-subfamily. In terms of assembly, homotetramer; which constitutes the Na(+)-activated K(+) channel. Interacts with KCNT2; these heterodimer channels differ from the homomers in their unitary conductance, kinetic behavior, subcellular localization, and response to activation of protein kinase C. Interacts (via C-terminus) with FMR1; this interaction alters gating properties of KCNT1. Interacts with CRBN via its cytoplasmic C-terminus. As to quaternary structure, does not interact with KCNT2. Post-translationally, phosphorylated by protein kinase C. Phosphorylation of the C-terminal domain increases channel activity. Detected in brain and brainstem, in vestibular and oculomotor nuclei, the medial nucleus of the trapezoid in the auditory system, in olfactory bulb, red nucleus, and deep cerebellar nuclei. Detected in thalamus, substantia nigra, and amygdala (at protein level). Highly expressed in the brain and kidney.

Its subcellular location is the cell membrane. The enzyme catalyses K(+)(in) = K(+)(out). Its activity is regulated as follows. Activated by high intracellular Na(+) level. In addition to activation by Na(+), is cooperatively activated by intracellular Cl(-) levels. Activated upon stimulation of G-protein coupled receptors, such as CHRM1 and GRIA1. In terms of biological role, sodium-activated K(+) channel. Acts as an important mediator of neuronal membrane excitability. Contributes to the delayed outward currents. Regulates neuronal bursting in sensory neurons. Contributes to synaptic development and plasticity. In Rattus norvegicus (Rat), this protein is Potassium channel subfamily T member 1 (Kcnt1).